A 90-amino-acid polypeptide reads, in one-letter code: Putative beta-neurotoxin RjAa14F (90 aa).

Residues 1 to 18 (MKILIFIIASFMLIGVEC) form the signal peptide. The 71-residue stretch at 19–89 (KEGYPTNSEG…VWDPNNNKCV (71 aa)) folds into the LCN-type CS-alpha/beta domain. 4 disulfides stabilise this stretch: Cys29–Cys88, Cys33–Cys62, Cys40–Cys69, and Cys44–Cys71.

This sequence belongs to the long (4 C-C) scorpion toxin superfamily. Sodium channel inhibitor family. Beta subfamily. Expressed by the venom gland.

It is found in the secreted. In terms of biological role, beta toxins bind voltage-independently at site-4 of sodium channels (Nav) and shift the voltage of activation toward more negative potentials thereby affecting sodium channel activation and promoting spontaneous and repetitive firing. This is Putative beta-neurotoxin RjAa14F from Rhopalurus junceus (Caribbean blue scorpion).